We begin with the raw amino-acid sequence, 272 residues long: Putative pyruvate, phosphate dikinase regulatory protein (272 aa).

151 to 158 (GISRTSKT) is a binding site for ADP.

Belongs to the pyruvate, phosphate/water dikinase regulatory protein family. PDRP subfamily.

It carries out the reaction N(tele)-phospho-L-histidyl/L-threonyl-[pyruvate, phosphate dikinase] + ADP = N(tele)-phospho-L-histidyl/O-phospho-L-threonyl-[pyruvate, phosphate dikinase] + AMP + H(+). The enzyme catalyses N(tele)-phospho-L-histidyl/O-phospho-L-threonyl-[pyruvate, phosphate dikinase] + phosphate + H(+) = N(tele)-phospho-L-histidyl/L-threonyl-[pyruvate, phosphate dikinase] + diphosphate. Its function is as follows. Bifunctional serine/threonine kinase and phosphorylase involved in the regulation of the pyruvate, phosphate dikinase (PPDK) by catalyzing its phosphorylation/dephosphorylation. This Staphylococcus aureus (strain Mu3 / ATCC 700698) protein is Putative pyruvate, phosphate dikinase regulatory protein.